The following is a 318-amino-acid chain: Small ribosomal subunit biogenesis GTPase RsgA (318 aa).

Positions 1-16 are enriched in basic residues; that stretch reads MTRGKPGRAGHDRRHA. A disordered region spans residues 1–21; it reads MTRGKPGRAGHDRRHASTGEH. The region spanning 84-249 is the CP-type G domain; sequence SDQFKSKQLA…LIDSPGFQEF (166 aa). GTP contacts are provided by residues 133–136 and 187–195; these read NKID and GQSGMGKSS. 4 residues coordinate Zn(2+): C273, C278, H280, and C286.

The protein belongs to the TRAFAC class YlqF/YawG GTPase family. RsgA subfamily. Monomer. Associates with 30S ribosomal subunit, binds 16S rRNA. It depends on Zn(2+) as a cofactor.

The protein localises to the cytoplasm. Its function is as follows. One of several proteins that assist in the late maturation steps of the functional core of the 30S ribosomal subunit. Helps release RbfA from mature subunits. May play a role in the assembly of ribosomal proteins into the subunit. Circularly permuted GTPase that catalyzes slow GTP hydrolysis, GTPase activity is stimulated by the 30S ribosomal subunit. This chain is Small ribosomal subunit biogenesis GTPase RsgA, found in Ralstonia nicotianae (strain ATCC BAA-1114 / GMI1000) (Ralstonia solanacearum).